A 166-amino-acid chain; its full sequence is Lipoprotein signal peptidase (166 aa).

A run of 3 helical transmembrane segments spans residues 12–32 (WLWV…LILQ), 70–90 (WFFS…MYRS), and 102–122 (ALII…GFVV). Active-site residues include Asp-123 and Asp-141. A helical membrane pass occupies residues 137–157 (FNLADSAICIGAALIVLEGFL).

This sequence belongs to the peptidase A8 family.

The protein resides in the cell inner membrane. It catalyses the reaction Release of signal peptides from bacterial membrane prolipoproteins. Hydrolyzes -Xaa-Yaa-Zaa-|-(S,diacylglyceryl)Cys-, in which Xaa is hydrophobic (preferably Leu), and Yaa (Ala or Ser) and Zaa (Gly or Ala) have small, neutral side chains.. It participates in protein modification; lipoprotein biosynthesis (signal peptide cleavage). This protein specifically catalyzes the removal of signal peptides from prolipoproteins. The chain is Lipoprotein signal peptidase from Klebsiella pneumoniae (strain 342).